A 405-amino-acid polypeptide reads, in one-letter code: Protein lin-11 (405 aa).

Residues K17 and K18 each participate in a glycyl lysine isopeptide (Lys-Gly) (interchain with G-Cter in SUMO) cross-link. LIM zinc-binding domains are found at residues 68 to 124 (CAAC…RRYS) and 127 to 187 (CAGC…TATK). The span at 189-205 (STPTSIHRPVSNGSECN) shows a compositional bias: polar residues. Disordered regions lie at residues 189–208 (STPTSIHRPVSNGSECNSDV) and 224–246 (GEGDCGKDNSDDSNSAKRRGPRT). Positions 241–300 (RRGPRTTIKAKQLETLKNAFAATPKPTRHIREQLAAETGLNMRVIQVWFQNRRSKERRMK) form a DNA-binding region, homeobox.

In terms of tissue distribution, expressed in ADL, AVJL, AIZL, RICL, RIF and AVG neurons.

The protein localises to the nucleus. Its function is as follows. Probable transcription factor which is required for asymmetric division of vulval blast cells. Involved in olfactory plasticity probably by regulating the expression of transcription factor mbr-1 in RIF neurons. Plays a role in the chemorepulsive response toward ascaroside pheromones mediated by the ADL sensory neurons, probably by regulating E-box motif 5'-CANNTG-3' containing target genes in the ADL neurons. Plays a role in the differentiation of the ADL sensory neurons. The sequence is that of Protein lin-11 (lin-11) from Caenorhabditis elegans.